The chain runs to 96 residues: Conantokin Rl-C (96 aa).

The signal sequence occupies residues 1–21 (MQLYTYLYLLVPLVTFHLILG). A propeptide spanning residues 22–78 (TGTLDHGDALTERRSADATALKPEPVLLQKSSARSTDDNGKDTQMKRIFKKRRNKAR) is cleaved from the precursor. Residues 36–85 (SADATALKPEPVLLQKSSARSTDDNGKDTQMKRIFKKRRNKARGEEELSE) form a disordered region. Positions 56 to 66 (STDDNGKDTQM) are enriched in basic and acidic residues. Glu81 lines the a divalent metal cation pocket. 4-carboxyglutamate is present on residues Glu81, Glu82, Glu85, Glu89, and Glu93. Glu85, Glu89, and Glu93 together coordinate a divalent metal cation. Asn96 carries the asparagine amide modification.

Belongs to the conotoxin B superfamily. Ca(2+) serves as cofactor. Requires Mg(2+) as cofactor. Expressed by the venom duct.

Its subcellular location is the secreted. In terms of biological role, conantokins inhibit N-methyl-D-aspartate (NMDA) receptors. This toxin has antagonist activity on NR2B/GRIN2B (IC(50)=1.4 uM) and NR2A/GRIN2A (IC(50)=2.9 uM) subunits, when tested on rat receptors. This is Conantokin Rl-C from Conus rolani (Cone snail).